We begin with the raw amino-acid sequence, 173 residues long: Sterile alpha motif domain-containing protein 5 (173 aa).

One can recognise an SAM domain in the interval 1–65 (MCTNIVYEWL…LEAVRRLREQ (65 aa)). The interval 75–119 (TLEPQPAPPGPPADAVPTGRRGEPCGGPAQGTRGDSRGHTTAPRS) is disordered. A compositionally biased stretch (pro residues) spans 79–88 (QPAPPGPPAD).

In terms of assembly, interacts promiscuously (via SAM domain) with EPHA5, EPHA6, EPHA7, EPHA8, EPHB1, EPHB2, EPHB3 and EPHB4 (via SAM domain) (in vitro). As to expression, detected in biliary epithelial cells on bile ducts at the hepatic hilum (at protein level).

It localises to the cytoplasm. This Homo sapiens (Human) protein is Sterile alpha motif domain-containing protein 5 (SAMD5).